Consider the following 421-residue polypeptide: MPFLHGFRRIIFEYQPLVDAILGSLGIQDPERQESLDRPSYVASEESRILVLTELLERKAHSPFYQEGVSNALLKMAELGLTRAADVLLRHGANLNFEDPVTYYTALHIAVLRNQPDMVELLVHHGADINRRDRIHESSPLDLASEEPERLPCLQRLLDLGADVNAADKHGKTALLHALASSDGVQIHNTENIRLLLEGGADVKATTKDGDTVFTCIIFLLGETVGGDKEEAQMINRFCFQVTRLLLAHGADPSECPAHESLTHICLKSFKLHFPLLRFLLESGAAYNCSLHGASCWSGFHIIFERLCSHPGCTEDESHTDLLRKAETVLDLMVTNSQKLQLPENFDIHPVGSLAEKIQALHFSLRQLESYPPPLKHLCRVAIRLYLQPWPVDVKVKALPLPDRLKWYLLSEHSGSMEDDI.

6 ANK repeats span residues glutamate 67–phenylalanine 97, threonine 102–arginine 131, histidine 136–alanine 166, histidine 170–alanine 205, glycine 226–glutamate 255, and glutamate 260–cysteine 289. Residues alanine 360–glycine 415 form the SOCS box domain.

The protein belongs to the ankyrin SOCS box (ASB) family. As to quaternary structure, binds APS. Identified in a complex with ELOB and ELOC. Interacts with CUL5 and RNF7. Interacts with SQSTM1.

It is found in the cytoplasm. It functions in the pathway protein modification; protein ubiquitination. Functionally, probable substrate-recognition component of a SCF-like ECS (Elongin-Cullin-SOCS-box protein) E3 ubiquitin-protein ligase complex which mediates the ubiquitination and subsequent proteasomal degradation of target proteins. May play a role in the regulation of cell proliferation and autophagy by promoting the ubiquitination and degradation of SQSTM1. In Pongo abelii (Sumatran orangutan), this protein is Ankyrin repeat and SOCS box protein 6 (ASB6).